The following is a 348-amino-acid chain: Outer membrane protein A (348 aa).

An N-terminal signal peptide occupies residues 1 to 21; that stretch reads MKKTAIAIAVALAGFATVAQA. A run of 8 beta stranded transmembrane segments spans residues 27–37, 55–66, 70–78, 96–107, 112–120, 146–155, 160–167, and 186–194; these read TWYTGAKLGWS, QLGAGAFGGYQV, VGFEMGYDW, QGVQLTAKLGYP, LDIYTRLGG, PVFAGGVEYA, IATRLEYQ, and LLSLGVSYR. The interval 201-210 is hinge-like; the sequence is APVVAPAPAP. 3 tandem repeats follow at residues 205–206, 207–208, and 209–210. The 3 X 2 AA tandem repeats of A-P stretch occupies residues 205 to 210; sequence APAPAP. Positions 212–340 constitute an OmpA-like domain; sequence VQTKHFTLKS…RVEIEVKGIK (129 aa). A disulfide bond links Cys-313 and Cys-325.

It belongs to the outer membrane OOP (TC 1.B.6) superfamily. OmpA family. In terms of assembly, monomer and homodimer. (Microbial infection) Upon infection with phage Sf6 associates with the mature bacteriophage capsid. Was originally suggested to be within the bacteriophage capsid. This has been disproven.

It localises to the extracellular vesicle. The protein localises to the cell outer membrane. With TolR probably plays a role in maintaining the position of the peptidoglycan cell wall in the periplasm. Acts as a porin with low permeability that allows slow penetration of small solutes; an internal gate slows down solute passage. Its function is as follows. Required for conjugation with F-type plasmids; probably serves as the mating receptor on recipient cells. Functionally, (Microbial infection) Serves as a secondary receptor during phage Sf6 infection; infection requires both lipopolysaccharide (LPS) and the OmpA beta-barrel. The sequence is that of Outer membrane protein A from Shigella flexneri.